The chain runs to 63 residues: MNRALILTFVLFFALFAISSAVNVENDFSSPVSQFCATLSELKCWINNICFWSTADKKCKPLH.

A signal peptide spans 1–21 (MNRALILTFVLFFALFAISSA).

This is an uncharacterized protein from Dictyostelium discoideum (Social amoeba).